Reading from the N-terminus, the 64-residue chain is Alpha-mammal toxin Lqh2 (64 aa).

In terms of domain architecture, LCN-type CS-alpha/beta spans 2–64 (KDGYIVDDVN…VRTKGPGRCR (63 aa)). 4 cysteine pairs are disulfide-bonded: C12–C63, C16–C36, C22–C46, and C26–C48. Arginine amide is present on R64.

It belongs to the long (4 C-C) scorpion toxin superfamily. Sodium channel inhibitor family. Alpha subfamily. As to expression, expressed by the venom gland.

The protein localises to the secreted. Alpha toxins bind voltage-independently at site-3 of sodium channels (Nav) and inhibit the inactivation of the activated channels, thereby blocking neuronal transmission. The dissociation is voltage-dependent. Is active on mammals and competes for alpha-toxins binding on both mammalian and cockroach sodium channels. The sequence is that of Alpha-mammal toxin Lqh2 from Leiurus hebraeus (Hebrew deathstalker scorpion).